A 214-amino-acid polypeptide reads, in one-letter code: Octanoyltransferase (214 aa).

Positions 32-207 (EDTLDEIWLV…NLLALLNHPP (176 aa)) constitute a BPL/LPL catalytic domain. Residues 71 to 78 (RGGQVTYH), 138 to 140 (SLG), and 151 to 153 (GLA) contribute to the substrate site. C169 serves as the catalytic Acyl-thioester intermediate.

Belongs to the LipB family.

The protein localises to the cytoplasm. The catalysed reaction is octanoyl-[ACP] + L-lysyl-[protein] = N(6)-octanoyl-L-lysyl-[protein] + holo-[ACP] + H(+). The protein operates within protein modification; protein lipoylation via endogenous pathway; protein N(6)-(lipoyl)lysine from octanoyl-[acyl-carrier-protein]: step 1/2. In terms of biological role, catalyzes the transfer of endogenously produced octanoic acid from octanoyl-acyl-carrier-protein onto the lipoyl domains of lipoate-dependent enzymes. Lipoyl-ACP can also act as a substrate although octanoyl-ACP is likely to be the physiological substrate. This Klebsiella pneumoniae (strain 342) protein is Octanoyltransferase.